We begin with the raw amino-acid sequence, 190 residues long: Probable E3 ubiquitin-protein ligase RHB1A (190 aa).

The RING-type; atypical zinc-finger motif lies at 139–180 (CPICFEDYDVENPRLTTKCEHEFHLSCLLEWIERSDRCPICD).

The enzyme catalyses S-ubiquitinyl-[E2 ubiquitin-conjugating enzyme]-L-cysteine + [acceptor protein]-L-lysine = [E2 ubiquitin-conjugating enzyme]-L-cysteine + N(6)-ubiquitinyl-[acceptor protein]-L-lysine.. It functions in the pathway protein modification; protein ubiquitination. Probable E3 ubiquitin-protein ligase that may possess E3 ubiquitin ligase activity in vitro. The chain is Probable E3 ubiquitin-protein ligase RHB1A from Arabidopsis thaliana (Mouse-ear cress).